We begin with the raw amino-acid sequence, 935 residues long: Peptidyl-glycine alpha-amidating monooxygenase A (935 aa).

The first 36 residues, 1–36 (MASLSSSFLVLFLLFQNSCYCFRSPLSVFKRYEEST), serve as a signal peptide directing secretion. Positions 1–390 (MASLSSSFLV…KREEEEVLDQ (390 aa)) are peptidylglycine alpha-hydroxylating monooxygenase. Topologically, residues 37–825 (RSLSNDCLGT…VQESSAGVSF (789 aa)) are intragranular. 5 disulfide bridges follow: C43-C182, C77-C122, C110-C127, C223-C330, and C289-C311. Cu(2+) is bound by residues H103 and H104. Cu(2+)-binding residues include H168, H238, H240, and M310. Residues 362–385 (HGHHHTEAEPEKNTGLQQPKREEE) are disordered. The segment at 391–712 (DVHLEEDTDW…SPSKAEHRSV (322 aa)) is peptidyl-alpha-hydroxyglycine alpha-amidating lyase. R426 contributes to the a protein binding site. 3 NHL repeats span residues 463–504 (SKVL…LGAG), 512–557 (LGRA…FSPN), and 565–609 (GEET…FHAE). Cystine bridges form between C526–C547 and C594–C605. Residues Y546 and R598 each coordinate a protein. N-linked (GlcNAc...) asparagine glycosylation occurs at N658. One copy of the NHL 4 repeat lies at 662 to 705 (GDILDTFIPARKNFDMPHDIAAADDGTVYVGDAHANAVWKFSPS). Basic and acidic residues predominate over residues 728-751 (FETHIRSRPKTNESVEKQTQEKQQ). Disordered stretches follow at residues 728 to 764 (FETH…TQEK) and 778 to 812 (QEKQ…TQEK). N739 carries N-linked (GlcNAc...) asparagine glycosylation. Over residues 755 to 764 (NSAGVSTQEK) the composition is skewed to polar residues. A helical transmembrane segment spans residues 826-846 (VLIITLLIIPIAVLIAIAIFI). The Cytoplasmic portion of the chain corresponds to 847–935 (RWRKVRMYGG…PIPPAPVSSS (89 aa)). A disordered region spans residues 896-935 (KGFDRLSTEGSDQEKDDDDGSDSEEEYSAPPIPPAPVSSS). Over residues 909-922 (EKDDDDGSDSEEEY) the composition is skewed to acidic residues. Residues 925–935 (PPIPPAPVSSS) show a composition bias toward pro residues.

In the C-terminal section; belongs to the peptidyl-alpha-hydroxyglycine alpha-amidating lyase family. The protein in the N-terminal section; belongs to the copper type II ascorbate-dependent monooxygenase family. Monomer. Requires Zn(2+) as cofactor. It depends on Cu(2+) as a cofactor.

The protein resides in the cytoplasmic vesicle. Its subcellular location is the secretory vesicle membrane. The enzyme catalyses a [peptide]-C-terminal glycine + 2 L-ascorbate + O2 = a [peptide]-C-terminal (2S)-2-hydroxyglycine + 2 monodehydro-L-ascorbate radical + H2O. It catalyses the reaction a [peptide]-C-terminal (2S)-2-hydroxyglycine = a [peptide]-C-terminal amide + glyoxylate. Functionally, bifunctional enzyme that catalyzes amidation of the C-terminus of proteins. Alpha-amidation is present at the C-terminus of many endocrine hormones and neuropeptides and is required for their activity. C-terminal amidation also takes place in response to protein fragmentation triggered by oxidative stress, promoting degradation of amidated protein fragments by the proteasome. Alpha-amidation involves two sequential reactions, both of which are catalyzed by separate catalytic domains of the enzyme. The first step, catalyzed by peptidyl alpha-hydroxylating monooxygenase (PHM) domain, is the copper-, ascorbate-, and O2- dependent stereospecific hydroxylation (with S stereochemistry) at the alpha-carbon (C-alpha) of the C-terminal glycine of the peptidylglycine substrate. The second step, catalyzed by the peptidylglycine amidoglycolate lyase (PAL) domain, is the zinc-dependent cleavage of the N-C-alpha bond, producing the alpha-amidated peptide and glyoxylate. This chain is Peptidyl-glycine alpha-amidating monooxygenase A (pam-a), found in Xenopus laevis (African clawed frog).